Consider the following 275-residue polypeptide: Putative rhamnulose-1-phosphate aldolase (275 aa).

Glu117 is an active-site residue. Zn(2+) contacts are provided by His141, His143, and His212.

Belongs to the aldolase class II family. RhaD subfamily. Homotetramer. It depends on Zn(2+) as a cofactor.

It localises to the cytoplasm. The catalysed reaction is L-rhamnulose 1-phosphate = (S)-lactaldehyde + dihydroxyacetone phosphate. It participates in carbohydrate degradation; L-rhamnose degradation; glycerone phosphate from L-rhamnose: step 3/3. Functionally, catalyzes the reversible cleavage of L-rhamnulose-1-phosphate to dihydroxyacetone phosphate (DHAP) and L-lactaldehyde. This Salmonella typhi protein is Putative rhamnulose-1-phosphate aldolase.